Here is a 587-residue protein sequence, read N- to C-terminus: Ankyrin repeat and SOCS box protein 14 (587 aa).

ANK repeat units follow at residues 81 to 110 (NGWLPLHKAAVQLNKNILEITMNASEPSTW), 116 to 145 (NGETALFLAVSSSLLENAHFLLLKGCNPNA), 149 to 178 (EGNSPLLTAVLKDAYDMATLLISHGADVNL), 182 to 211 (NERTALHEAAKLGRLDMVKLMLASGAYPDA), 215 to 244 (YGFTPLALAAQGGHTGIMQLLLQKGADVHS), 248 to 277 (DSSSVLLEAVRGGNPEAVSLLLEYGADANI), 281 to 310 (SGHLPIHVAADKGHFLALKVLVPVTDIAAI), 313 to 342 (SGISPVHCAAAGAHPHCLELLIQAGFDVNF), 355 to 384 (QRKSALYFAVSNGDLPSVKLLLSAGALPNQ), 385 to 414 (DPVNCLQIALRMGNYELISLLLRHGANVNY), and 416 to 449 (CRVNPLHFPSALQYTLKDEVMLRMLLNYGYDTER). The region spanning 521-576 (WPEIHFILANPRSLQHLCRLKIRKCMGRLRLRCPVFMSFLPLPNLLKAYVLYKEYD) is the SOCS box domain.

Belongs to the ankyrin SOCS box (ASB) family. As to quaternary structure, interacts with MAPRE2; this interaction promotes MAPRE2 degradation.

Its pathway is protein modification; protein ubiquitination. May be a substrate-recognition component of a SCF-like ECS (Elongin-Cullin-SOCS-box protein) E3 ubiquitin-protein ligase complex which mediates the ubiquitination and subsequent proteasomal degradation of target proteins. Plays a role in the inhibition of cardiomyocyte nuclear proliferation by mediating the ubiquitination and degradation of MAPRE2. This Mus musculus (Mouse) protein is Ankyrin repeat and SOCS box protein 14 (Asb14).